The following is a 239-amino-acid chain: Pentatricopeptide repeat-containing protein DWY1, chloroplastic (239 aa).

The transit peptide at 1–35 (MALEAAFSMSFCSFSVPKAIFCERETSSFQRITSR) directs the protein to the chloroplast. Disordered stretches follow at residues 40–59 (AGES…KETS) and 101–122 (HISP…SGGE). The span at 111–122 (VRGDKPEISGGE) shows a compositional bias: basic and acidic residues. Positions 113–144 (GDKPEISGGEKKAIVDRSKAYVKLKSLGKEVR) are type E(+) motif. The interval 145-239 (DAGYVPETKY…DGNCSCGDYW (95 aa)) is type DYW motif.

It belongs to the PPR family. PCMP-H subfamily. Interacts with CRR4. Zn(2+) serves as cofactor.

Its subcellular location is the plastid. The protein resides in the chloroplast. In terms of biological role, plays a major role in single RNA editing events in chloroplasts. Acts as a site-recognition transacting factor involved in the edition of the site 1 of ndhD (ndhD-1 site corresponding to cytidine-2), which is a plastid-encoded subunit of the NADH-plastoquinone oxidoreductase. The interaction with CRR4 is required for its function in editing the ndhD-1 site. This chain is Pentatricopeptide repeat-containing protein DWY1, chloroplastic, found in Arabidopsis thaliana (Mouse-ear cress).